The chain runs to 329 residues: Strigolactones hydrolase CXE15 (329 aa).

The short motif at 83–85 is the Involved in the stabilization of the negatively charged intermediate by the formation of the oxyanion hole element; that stretch reads HGG. Residues Gly-85, Gly-86, Ser-169, and Ser-170 each contribute to the (-)-2'-epi-GR24 site. Residue Ser-169 is the Nucleophile of the active site. Active-site residues include Glu-271 and His-302.

The protein belongs to the 'GDXG' lipolytic enzyme family. Expressed in axillary buds, leaves, stems, hypocotyls, flowers, siliques, and vasculatures of shoots and roots.

The protein localises to the nucleus. The protein resides in the cytoplasm. It is found in the cytosol. It carries out the reaction (-)-2'-epi-GR24 + H2O = (-)-2'-epi-GR24 ABC-rings + 5-hydroxy-3-methylfuran-2(5H)-one. It catalyses the reaction 5-deoxystrigol + H2O = 5-deoxystrigol ABC-rings + 5-hydroxy-3-methylfuran-2(5H)-one. The catalysed reaction is orobanchol + H2O = orobanchol ABC-rings + 5-hydroxy-3-methylfuran-2(5H)-one. In terms of biological role, binds to strigolactones (SLs) such as (-)-2'-epi-GR24(4DO), 5-deoxystrigol (5DS) and orobanchol, and catalyzes their hydrolysis; SL are phytohormones controlling shoot branching and communications between plants and microorganisms. Promotes shoot branching by dampening SL-inhibited axillary bud outgrowth. This Arabidopsis thaliana (Mouse-ear cress) protein is Strigolactones hydrolase CXE15.